The primary structure comprises 1911 residues: Protein TIC 214 (1911 aa).

The next 6 membrane-spanning stretches (helical) occupy residues 41–61 (IINSVVIVGLYYGFMTTFSIG), 81–103 (ISATTGFIMGQLIIFISIYYAPL), 108–128 (GKPHTMTVLVLPYLLFNFFWN), 147–167 (FNIQCIFLNNFIFQLFNHFIL), 195–215 (IGWLIGHIFFIKCVGLVLFWI), and 238–258 (IFSILLFITCVYYLGRMPLPI). 3 disordered regions span residues 265 to 299 (ETSETEESEENEEESDIEITSEPKEQDEEEGSTEE), 798 to 817 (DSEEEETKEREKNKEKKEEN), and 1599 to 1647 (NQNQ…RKKK). Over residues 268–297 (ETEESEENEEESDIEITSEPKEQDEEEGST) the composition is skewed to acidic residues. Basic and acidic residues-rich tracts occupy residues 1603–1615 (QEKKQKLSQRDLG) and 1623–1635 (QKQKKKEDGEKNY).

Belongs to the TIC214 family. Part of the Tic complex.

The protein localises to the plastid. It localises to the chloroplast inner membrane. In terms of biological role, involved in protein precursor import into chloroplasts. May be part of an intermediate translocation complex acting as a protein-conducting channel at the inner envelope. The polypeptide is Protein TIC 214 (Lemna minor (Common duckweed)).